Here is a 337-residue protein sequence, read N- to C-terminus: Probable dual-specificity RNA methyltransferase RlmN (337 aa).

The active-site Proton acceptor is E88. The region spanning 94-322 is the Radical SAM core domain; sequence SSDRLTVCVS…ASIRRSRGLD (229 aa). C101 and C327 are disulfide-bonded. Positions 108, 112, and 115 each coordinate [4Fe-4S] cluster. Residues 155 to 156, S185, 208 to 210, and N284 contribute to the S-adenosyl-L-methionine site; these read GE and SLH. C327 (S-methylcysteine intermediate) is an active-site residue.

This sequence belongs to the radical SAM superfamily. RlmN family. Requires [4Fe-4S] cluster as cofactor.

Its subcellular location is the cytoplasm. It carries out the reaction adenosine(2503) in 23S rRNA + 2 reduced [2Fe-2S]-[ferredoxin] + 2 S-adenosyl-L-methionine = 2-methyladenosine(2503) in 23S rRNA + 5'-deoxyadenosine + L-methionine + 2 oxidized [2Fe-2S]-[ferredoxin] + S-adenosyl-L-homocysteine. The enzyme catalyses adenosine(37) in tRNA + 2 reduced [2Fe-2S]-[ferredoxin] + 2 S-adenosyl-L-methionine = 2-methyladenosine(37) in tRNA + 5'-deoxyadenosine + L-methionine + 2 oxidized [2Fe-2S]-[ferredoxin] + S-adenosyl-L-homocysteine. In terms of biological role, specifically methylates position 2 of adenine 2503 in 23S rRNA and position 2 of adenine 37 in tRNAs. The protein is Probable dual-specificity RNA methyltransferase RlmN of Thermosynechococcus vestitus (strain NIES-2133 / IAM M-273 / BP-1).